The sequence spans 149 residues: MLTIDIQQASTADASQLPSDKQFEIWVEAALQQRMNEAELSIRIVDEDESQALNLQYRGKDKSTNVLSFPCELPDGVELPLLGDLVICAQVVAKEALEQGKLLHAHWAHMVVHGTLHLLGYDHIEDGEAEEMEAIEIQVLLELGYPNPY.

Residues His-113, His-117, and His-123 each coordinate Zn(2+).

The protein belongs to the endoribonuclease YbeY family. It depends on Zn(2+) as a cofactor.

It is found in the cytoplasm. In terms of biological role, single strand-specific metallo-endoribonuclease involved in late-stage 70S ribosome quality control and in maturation of the 3' terminus of the 16S rRNA. The polypeptide is Endoribonuclease YbeY (Saccharophagus degradans (strain 2-40 / ATCC 43961 / DSM 17024)).